The chain runs to 323 residues: Protein REDOX 2 (323 aa).

An NADP(+)-binding site is contributed by aspartate 53. The Proton donor role is filled by tyrosine 58. Residue histidine 121 participates in substrate binding. Residues 167 to 168, glutamine 189, 215 to 220, and 289 to 297 contribute to the NADP(+) site; these read SN, WSPLLS, and DQIHEIPQR. The disordered stretch occupies residues 302–323; it reads GEEFMHPEGPIKSPEELWDGDL.

It belongs to the aldo/keto reductase family. In terms of assembly, monomer. As to expression, expressed in leaf epidermis.

It carries out the reaction 15alpha-stemmadenine + NADP(+) = 17-dehydrostemmadenine + NADPH + 2 H(+). The protein operates within alkaloid biosynthesis. Functionally, component of iboga and aspidosperma monoterpenoid indole alkaloids (MIAs, e.g. tabersonine and catharanthine) biosynthesis pathway from 19E-geissoschizine. Catalyzes the second oxidation step of the unstable intermediate product resulting from the reaction triggered by the geissoschizine oxidase (GO) in the stemmadenine biosynthesis process from 19E-geissoschizine. The polypeptide is Protein REDOX 2 (Catharanthus roseus (Madagascar periwinkle)).